The following is a 494-amino-acid chain: V-type proton ATPase subunit B (494 aa).

Arginine 384 provides a ligand contact to ATP.

It belongs to the ATPase alpha/beta chains family. V-ATPase is a heteromultimeric enzyme made up of two complexes: the ATP-hydrolytic V1 complex and the proton translocation V0 complex. The V1 complex consists of three catalytic AB heterodimers that form a heterohexamer, three peripheral stalks each consisting of EG heterodimers, one central rotor including subunits D and F, and the regulatory subunits C and H. The proton translocation complex V0 consists of the proton transport subunit a, a ring of proteolipid subunits c9c'', rotary subunit d, subunits e and f, and the accessory subunits VhaAC45 and ATP6AP2.

Functionally, non-catalytic subunit of the V1 complex of vacuolar(H+)-ATPase (V-ATPase), a multisubunit enzyme composed of a peripheral complex (V1) that hydrolyzes ATP and a membrane integral complex (V0) that translocates protons. V-ATPase is responsible for acidifying and maintaining the pH of intracellular compartments and in some cell types, is targeted to the plasma membrane, where it is responsible for acidifying the extracellular environment. Essential for the proper assembly and activity of V-ATPase. This Manduca sexta (Tobacco hawkmoth) protein is V-type proton ATPase subunit B (VHA55).